The primary structure comprises 345 residues: Probable dual-specificity RNA methyltransferase RlmN (345 aa).

The Proton acceptor role is filled by Glu90. One can recognise a Radical SAM core domain in the interval 96-327; that stretch reads QSYGNSVCVT…CIVRREFGHD (232 aa). A disulfide bridge connects residues Cys103 and Cys332. [4Fe-4S] cluster is bound by residues Cys110, Cys114, and Cys117. Residues 160–161, Ser192, 215–217, and Asn291 each bind S-adenosyl-L-methionine; these read GE and SLH. The active-site S-methylcysteine intermediate is the Cys332.

Belongs to the radical SAM superfamily. RlmN family. [4Fe-4S] cluster serves as cofactor.

It is found in the cytoplasm. It carries out the reaction adenosine(2503) in 23S rRNA + 2 reduced [2Fe-2S]-[ferredoxin] + 2 S-adenosyl-L-methionine = 2-methyladenosine(2503) in 23S rRNA + 5'-deoxyadenosine + L-methionine + 2 oxidized [2Fe-2S]-[ferredoxin] + S-adenosyl-L-homocysteine. The catalysed reaction is adenosine(37) in tRNA + 2 reduced [2Fe-2S]-[ferredoxin] + 2 S-adenosyl-L-methionine = 2-methyladenosine(37) in tRNA + 5'-deoxyadenosine + L-methionine + 2 oxidized [2Fe-2S]-[ferredoxin] + S-adenosyl-L-homocysteine. Specifically methylates position 2 of adenine 2503 in 23S rRNA and position 2 of adenine 37 in tRNAs. In Spiroplasma citri, this protein is Probable dual-specificity RNA methyltransferase RlmN.